The chain runs to 660 residues: PAN2-PAN3 deadenylation complex subunit PAN3 (660 aa).

The segment at 7–36 (SAKDTFCKNVLIYGYCKYENKGCAFSHTVK) adopts a C3H1-type zinc-finger fold. Disordered regions lie at residues 36–60 (KPTS…TNAD) and 150–186 (SPVM…PTSA). The span at 43-59 (GSQGSNATTNSSGNTNA) shows a compositional bias: low complexity. Residues 59 to 79 (ADMKKKFNFNTPSFQPSTVPN) carry the PABPC-interacting motif-2 (PAM-2) motif. A compositionally biased stretch (polar residues) spans 150–159 (SPVMAQSVST). The interval 252–528 (QTLPRSNLPD…LQEFNRNHLS (277 aa)) is pseudokinase domain. ATP-binding positions include Arg-304, 358 to 365 (DYFPNSNT), and 415 to 416 (SK). Residues 529–567 (RRILNFCSNAQDSQDFMESQLSTELENARVFRLITKLNF) are a coiled coil. Positions 568 to 660 (IIDRPEYDND…DSAFRTLTRG (93 aa)) are knob domain.

It belongs to the protein kinase superfamily. PAN3 family. As to quaternary structure, homodimer. Forms a heterotrimer with a catalytic subunit PAN2 to form the poly(A)-nuclease (PAN) deadenylation complex. Interacts (via PAM-2 motif) with poly(A)-binding protein PAB1 (via PABC domain), conferring substrate specificity of the enzyme complex.

Its subcellular location is the cytoplasm. Its function is as follows. Regulatory subunit of the poly(A)-nuclease (PAN) deadenylation complex, one of two cytoplasmic mRNA deadenylases involved in mRNA turnover. PAN specifically shortens poly(A) tails of RNA and the activity is stimulated by poly(A)-binding protein PAB1. PAN deadenylation is followed by rapid degradation of the shortened mRNA tails by the CCR4-NOT complex. Deadenylated mRNAs are then degraded by two alternative mechanisms, namely exosome-mediated 3'-5' exonucleolytic degradation, or deadenylation-dependent mRNA decaping and subsequent 5'-3' exonucleolytic degradation by XRN1. May also be involved in post-transcriptional maturation of mRNA poly(A) tails. PAN3 acts as a positive regulator for PAN activity, recruiting the catalytic subunit PAN2 to mRNA via its interaction with RNA and with PAB1. This chain is PAN2-PAN3 deadenylation complex subunit PAN3, found in Debaryomyces hansenii (strain ATCC 36239 / CBS 767 / BCRC 21394 / JCM 1990 / NBRC 0083 / IGC 2968) (Yeast).